Consider the following 118-residue polypeptide: DNA-binding protein inhibitor ID-3-B (118 aa).

One can recognise a bHLH domain in the interval 32 to 84; sequence SLKGAGIDETMGLLYDMNGCYSKLKELVPGIPQGSKLSQVEILQHVIDYIFDL.

Homodimer. Heterodimer with other HLH proteins. Interacts (via HLH domain) with the bHLH protein hes4/hairy2 (via Orange domain). Interacts with stat3.

It localises to the nucleus. In terms of biological role, transcriptional regulator (lacking a basic DNA binding domain) which negatively regulates the basic helix-loop-helix (bHLH) transcription factors by forming heterodimers and inhibiting their DNA binding and transcriptional activity. Influences cell fate decisions in the embryo by sequestering and blocking the activity of the bHLH transcription factors that control these decisions. Inhibits the binding of myogenic bHLH-containing complexes to E-box DNA, thereby preventing activation of muscle-specific target genes. Also inhibits the activity of neurogenic factor neurod1/neuroD. Plays a role in cell cycle progression and survival of neural crest progenitors; binding to either hes4-B/hairy2b or stat3 blocks the formation of transcription factor complexes and the repressor function of hes4-B/hairy2B, to allow neural crest progenitors to differentiate. May play a role in the regulation of the circadian rhythm. The chain is DNA-binding protein inhibitor ID-3-B (id3-b) from Xenopus laevis (African clawed frog).